The primary structure comprises 156 residues: Arginine repressor (156 aa).

It belongs to the ArgR family.

The protein resides in the cytoplasm. Its pathway is amino-acid biosynthesis; L-arginine biosynthesis [regulation]. Regulates arginine biosynthesis genes. This chain is Arginine repressor, found in Escherichia coli O81 (strain ED1a).